A 457-amino-acid chain; its full sequence is MDIIIKNGTIVTADGISRADLGIKDGKITQIGGALGPAERTIDAAGRYVFPGGIDVHTHVETVSFNTQSADTFATATVAAACGGTTTIVDFCQQDRGHSLAEAVAKWDGMAGGKSAIDYGYHIIVLDPTDSVIEELEVLPDLGITSFKVFMAYRGMNMIDDVTLLKTLDKAVKTGSLVMVHAENGDAADYLRDKFVAEGKTAPIYHALSRPPRVEAEATARALALAEIVNAPIYIVHVTCEESLEEVMRAKSRGVRALAETCTHYLYLTKEDLERPDFEGAKYVFTPPARAKKDHDVLWNALRNGVFETVSSDHCSWLFKGHKDRGRNDFRAIPNGAPGVEERLMMVYQGVNEGRISLTQFVELVATRPAKVFGMFPQKGTIAVGSDADIVLWDPEAEMVIEQTAMHNAMDYSSYEGHKVKGVPKTVLLRGKVIVDEGSYVGEPTDGKFLKRRKYKQ.

Zn(2+) contacts are provided by H57 and H59. At S69 the chain carries Phosphoserine. K148 contacts Zn(2+). An N6-carboxylysine modification is found at K148. A substrate-binding site is contributed by Y153. Residues H181 and H237 each coordinate Zn(2+). Position 286 (T286) interacts with substrate. D313 is a Zn(2+) binding site. N335 provides a ligand contact to substrate.

This sequence belongs to the metallo-dependent hydrolases superfamily. Hydantoinase/dihydropyrimidinase family. As to quaternary structure, homodimer and homotetramer. The cofactor is Zn(2+). In terms of processing, carboxylation allows a single lysine to coordinate two zinc ions.

In terms of biological role, catalyzes the stereospecific hydrolysis of the cyclic amide bond of D-hydantoin derivatives. The chain is D-hydantoinase (hyuA) from Ralstonia pickettii (Burkholderia pickettii).